Consider the following 29-residue polypeptide: Cytochrome b6-f complex subunit 8 (29 aa).

The chain crosses the membrane as a helical span at residues 3–23; the sequence is MVSLAWAALMVVFTFSLSLVV.

The protein belongs to the PetN family. As to quaternary structure, the 4 large subunits of the cytochrome b6-f complex are cytochrome b6, subunit IV (17 kDa polypeptide, PetD), cytochrome f and the Rieske protein, while the 4 small subunits are PetG, PetL, PetM and PetN. The complex functions as a dimer.

It is found in the plastid. The protein resides in the chloroplast thylakoid membrane. Its function is as follows. Component of the cytochrome b6-f complex, which mediates electron transfer between photosystem II (PSII) and photosystem I (PSI), cyclic electron flow around PSI, and state transitions. In Cucumis sativus (Cucumber), this protein is Cytochrome b6-f complex subunit 8.